The primary structure comprises 249 residues: Ribonuclease PH (249 aa).

Phosphate is bound by residues arginine 86 and 124 to 126 (GTR).

Belongs to the RNase PH family. As to quaternary structure, homohexameric ring arranged as a trimer of dimers.

The catalysed reaction is tRNA(n+1) + phosphate = tRNA(n) + a ribonucleoside 5'-diphosphate. In terms of biological role, phosphorolytic 3'-5' exoribonuclease that plays an important role in tRNA 3'-end maturation. Removes nucleotide residues following the 3'-CCA terminus of tRNAs; can also add nucleotides to the ends of RNA molecules by using nucleoside diphosphates as substrates, but this may not be physiologically important. Probably plays a role in initiation of 16S rRNA degradation (leading to ribosome degradation) during starvation. The chain is Ribonuclease PH from Clostridium botulinum (strain Alaska E43 / Type E3).